Consider the following 36-residue polypeptide: Photosystem II reaction center protein M (36 aa).

A helical membrane pass occupies residues 5 to 25 (ILAFIATALFILVPTAFLLII).

This sequence belongs to the PsbM family. PSII is composed of 1 copy each of membrane proteins PsbA, PsbB, PsbC, PsbD, PsbE, PsbF, PsbH, PsbI, PsbJ, PsbK, PsbL, PsbM, PsbT, PsbX, PsbY, PsbZ, Psb30/Ycf12, at least 3 peripheral proteins of the oxygen-evolving complex and a large number of cofactors. It forms dimeric complexes.

It is found in the plastid. Its subcellular location is the chloroplast thylakoid membrane. Its function is as follows. One of the components of the core complex of photosystem II (PSII). PSII is a light-driven water:plastoquinone oxidoreductase that uses light energy to abstract electrons from H(2)O, generating O(2) and a proton gradient subsequently used for ATP formation. It consists of a core antenna complex that captures photons, and an electron transfer chain that converts photonic excitation into a charge separation. This subunit is found at the monomer-monomer interface. This Panax ginseng (Korean ginseng) protein is Photosystem II reaction center protein M.